The primary structure comprises 1110 residues: Retinal guanylyl cyclase 1 (1110 aa).

Positions 1 to 56 (MTACTFLAGGLRDPGLCGPTRWAPSPPGLPPIPPRPRLRLRPPLLLLLLLPRSVLS) are cleaved as a signal peptide. Topologically, residues 57–467 (AVFTVGVLGP…PDTICNGGVE (411 aa)) are extracellular. A glycan (N-linked (GlcNAc...) asparagine) is linked at Asn302. A helical transmembrane segment spans residues 468–492 (PSVVFIGFLLVVGMGLAGAFLAHYC). In terms of domain architecture, Protein kinase spans 493 to 813 (RHRLLHIQMV…DRTFELFKSI (321 aa)). Topologically, residues 493–1110 (RHRLLHIQMV…KARPGQFSGK (618 aa)) are cytoplasmic. Residues 885–1015 (TLYFSDIVGF…DTVNTASAME (131 aa)) form the Guanylate cyclase domain. A disordered region spans residues 1070–1110 (PIPKPPDLQPGASNHGISLHEIPPDRRQKLEKARPGQFSGK). A compositionally biased stretch (basic and acidic residues) spans 1091-1103 (IPPDRRQKLEKAR).

The protein belongs to the adenylyl cyclase class-4/guanylyl cyclase family. As to quaternary structure, homodimer; requires homodimerization for guanylyl cyclase activity. Interacts (via C-terminus) with RD3 (via C-terminus); promotes the exit of GUCY2D from the endoplasmic reticulum and its trafficking to the photoreceptor outer segments. Interaction with RD3 negatively regulates GUCY2D guanylate cyclase activity. In terms of tissue distribution, expressed in the retina in rod outer segment.

It is found in the photoreceptor outer segment membrane. It localises to the endoplasmic reticulum membrane. The catalysed reaction is GTP = 3',5'-cyclic GMP + diphosphate. Activated by GUCA1A when free calcium ions concentration is low, and inhibited by GUCA1A when free calcium ions concentration is high. Negatively regulated by RD3; inhibits the basal and GUCA1A-stimulated guanylate cyclase activity. Functionally, catalyzes the synthesis of cyclic GMP (cGMP) in rods and cones of photoreceptors. Plays an essential role in phototransduction, by mediating cGMP replenishment. May also participate in the trafficking of membrane-asociated proteins to the photoreceptor outer segment membrane. The sequence is that of Retinal guanylyl cyclase 1 (GUCY2D) from Bos taurus (Bovine).